Reading from the N-terminus, the 416-residue chain is Histidine--tRNA ligase (416 aa).

This sequence belongs to the class-II aminoacyl-tRNA synthetase family. In terms of assembly, homodimer.

The protein resides in the cytoplasm. The catalysed reaction is tRNA(His) + L-histidine + ATP = L-histidyl-tRNA(His) + AMP + diphosphate + H(+). In Clostridium novyi (strain NT), this protein is Histidine--tRNA ligase.